Reading from the N-terminus, the 363-residue chain is S-adenosylmethionine decarboxylase proenzyme (363 aa).

Residues Glu-9 and Glu-12 contribute to the active site. Ser-69 functions as the Schiff-base intermediate with substrate; via pyruvic acid in the catalytic mechanism. A Pyruvic acid (Ser); by autocatalysis modification is found at Ser-69. The active-site Proton donor; for catalytic activity is Cys-83. Residues Ser-232 and His-245 each act as proton acceptor; for processing activity in the active site.

The protein belongs to the eukaryotic AdoMetDC family. The cofactor is pyruvate. Is synthesized initially as an inactive proenzyme. Formation of the active enzyme involves a self-maturation process in which the active site pyruvoyl group is generated from an internal serine residue via an autocatalytic post-translational modification. Two non-identical subunits are generated from the proenzyme in this reaction, and the pyruvate is formed at the N-terminus of the alpha chain, which is derived from the carboxyl end of the proenzyme. The post-translation cleavage follows an unusual pathway, termed non-hydrolytic serinolysis, in which the side chain hydroxyl group of the serine supplies its oxygen atom to form the C-terminus of the beta chain, while the remainder of the serine residue undergoes an oxidative deamination to produce ammonia and the pyruvoyl group blocking the N-terminus of the alpha chain.

The catalysed reaction is S-adenosyl-L-methionine + H(+) = S-adenosyl 3-(methylsulfanyl)propylamine + CO2. It participates in amine and polyamine biosynthesis; S-adenosylmethioninamine biosynthesis; S-adenosylmethioninamine from S-adenosyl-L-methionine: step 1/1. This chain is S-adenosylmethionine decarboxylase proenzyme (SAMDC), found in Spinacia oleracea (Spinach).